A 408-amino-acid chain; its full sequence is Argininosuccinate synthase (408 aa).

Residues 10-18 (AYSGGLDTS) and A37 each bind ATP. L-citrulline contacts are provided by Y90 and S95. An ATP-binding site is contributed by G120. Residues T122, N126, and D127 each coordinate L-aspartate. L-citrulline is bound at residue N126. Positions 130, 182, 191, 267, and 279 each coordinate L-citrulline.

This sequence belongs to the argininosuccinate synthase family. Type 1 subfamily. In terms of assembly, homotetramer.

The protein resides in the cytoplasm. It carries out the reaction L-citrulline + L-aspartate + ATP = 2-(N(omega)-L-arginino)succinate + AMP + diphosphate + H(+). It functions in the pathway amino-acid biosynthesis; L-arginine biosynthesis; L-arginine from L-ornithine and carbamoyl phosphate: step 2/3. In Paraburkholderia xenovorans (strain LB400), this protein is Argininosuccinate synthase.